We begin with the raw amino-acid sequence, 911 residues long: MDFDSDSDGSHVSATPPRDSFPSSPPQLQSPAKHVPPVSRKMTSSSSRSKPKAPTHPPPNPSQEAPVPSPYPPPPPPSPLFTNLPFRICQSQPARFSSSVSSFSRLCSRASFTSVEKLKSDGVDFVPEPPLVEVIAPPKSVRRKPPNLITDTITSPPVKPMVFRSNGNGEGNFVKLNLNGKRGKKFPSKYKGVSKSRSSYSFRGKRYKKKEADGDGESLLEEESDLQKQIEDEANGFISSVEDAILAVKTEASDENLTKLLNLVYGYDSFRDGQLQAIKMILGGSSTMLVLPTGAGKSLCYQIPAMILPGITLVVSPLVSLMIDQLKHLPSIIKGGLLSSSQRPEEATETLRKLKEGIIKVLFVSPERLLNVEFLSMFRMSLSVSLVVVDEAHCVSEWSHNFRPSYMRLKASMLFSELKAECILAMTATATTMTLQAVMSSLEIPSTNLIQKSQLRDNFELSVSLSGANRMKDLLILMESPPYKEIRSIIVYCKFQYETDMISKYLRDNNINAKGYHSGLPAKDRVRIQESFCSNKIRVVVATVAFGMGLDKGDVGAVIHFSVPGSMEEYVQEIGRAGRDGRLSYCHLFYDNDTYLKLRSLAHSDGVDEYAVGKFLTHVFSTETKQHEKICSLVIESASQKFDMKEEVMQTILTHLELGEVQYLRMLPQLNICCTLNFHKSSPNTLAARSAIVAAILKKSHVKQGLHVFDIPAVASSICVATTDVLAEIQALKMKGEVTYELKDSAFCYTILKSPKEICSLSSHLTKWLTEIESCKVRKLDIMSSAAVAAISVSNTSELSSGAKQTRSLQSRIFDYFNGDEKCDSPSKATQNCAFLRADIKVFLQSNRQAKFTPRAIARIMHGVGSPAFPNSVWSKTHFWGRYMNVDFRVIMEAAQTELFNFVDRNAALAT.

The disordered stretch occupies residues 1-84; the sequence is MDFDSDSDGS…PPPSPLFTNL (84 aa). Low complexity predominate over residues 20–48; that stretch reads SFPSSPPQLQSPAKHVPPVSRKMTSSSSR. Residues 54–79 are compositionally biased toward pro residues; that stretch reads PTHPPPNPSQEAPVPSPYPPPPPPSP. In terms of domain architecture, Helicase ATP-binding spans 278–448; that stretch reads IKMILGGSST…MSSLEIPSTN (171 aa). 291–298 is an ATP binding site; the sequence is LPTGAGKS. The short motif at 390–393 is the DEAH box element; it reads DEAH. The Helicase C-terminal domain occupies 470–628; the sequence is RMKDLLILME…VFSTETKQHE (159 aa).

It belongs to the helicase family. RecQ subfamily. In terms of tissue distribution, mostly expressed in roots, seedlings, shoots, shoot apical mersitem, flowers, and siliques.

Its subcellular location is the nucleus. It carries out the reaction Couples ATP hydrolysis with the unwinding of duplex DNA by translocating in the 3'-5' direction.. The catalysed reaction is ATP + H2O = ADP + phosphate + H(+). 3'-5' DNA helicase that may play a role in the repair of DNA. This Arabidopsis thaliana (Mouse-ear cress) protein is ATP-dependent DNA helicase Q-like 5 (RECQL5).